The following is an 88-amino-acid chain: Large ribosomal subunit protein eL37A (88 aa).

Zn(2+) contacts are provided by cysteine 19, cysteine 22, cysteine 34, and cysteine 37. A C4-type zinc finger spans residues 19–37; it reads CNRCGRRSFHVQKKTCSSC.

This sequence belongs to the eukaryotic ribosomal protein eL37 family. Component of the large ribosomal subunit (LSU). Mature yeast ribosomes consist of a small (40S) and a large (60S) subunit. The 40S small subunit contains 1 molecule of ribosomal RNA (18S rRNA) and 33 different proteins (encoded by 57 genes). The large 60S subunit contains 3 rRNA molecules (25S, 5.8S and 5S rRNA) and 46 different proteins (encoded by 81 genes). The cofactor is Zn(2+).

The protein localises to the cytoplasm. Functionally, component of the ribosome, a large ribonucleoprotein complex responsible for the synthesis of proteins in the cell. The small ribosomal subunit (SSU) binds messenger RNAs (mRNAs) and translates the encoded message by selecting cognate aminoacyl-transfer RNA (tRNA) molecules. The large subunit (LSU) contains the ribosomal catalytic site termed the peptidyl transferase center (PTC), which catalyzes the formation of peptide bonds, thereby polymerizing the amino acids delivered by tRNAs into a polypeptide chain. The nascent polypeptides leave the ribosome through a tunnel in the LSU and interact with protein factors that function in enzymatic processing, targeting, and the membrane insertion of nascent chains at the exit of the ribosomal tunnel. The protein is Large ribosomal subunit protein eL37A of Saccharomyces cerevisiae (strain ATCC 204508 / S288c) (Baker's yeast).